The sequence spans 458 residues: ATP synthase subunit beta (458 aa).

Position 148-155 (148-155) interacts with ATP; that stretch reads GGAGVGKT.

Belongs to the ATPase alpha/beta chains family. F-type ATPases have 2 components, CF(1) - the catalytic core - and CF(0) - the membrane proton channel. CF(1) has five subunits: alpha(3), beta(3), gamma(1), delta(1), epsilon(1). CF(0) has three main subunits: a(1), b(2) and c(9-12). The alpha and beta chains form an alternating ring which encloses part of the gamma chain. CF(1) is attached to CF(0) by a central stalk formed by the gamma and epsilon chains, while a peripheral stalk is formed by the delta and b chains.

The protein localises to the cell inner membrane. It catalyses the reaction ATP + H2O + 4 H(+)(in) = ADP + phosphate + 5 H(+)(out). In terms of biological role, produces ATP from ADP in the presence of a proton gradient across the membrane. The catalytic sites are hosted primarily by the beta subunits. In Francisella tularensis subsp. tularensis (strain FSC 198), this protein is ATP synthase subunit beta.